Reading from the N-terminus, the 585-residue chain is Potassium-transporting ATPase potassium-binding subunit (585 aa).

12 helical membrane-spanning segments follow: residues G23–F43, F85–F105, F152–F172, I194–I214, V275–F295, V307–V327, A345–A365, N367–L387, G397–G417, L444–V464, L502–A522, and V547–L567.

Belongs to the KdpA family. As to quaternary structure, the system is composed of three essential subunits: KdpA, KdpB and KdpC.

Its subcellular location is the cell membrane. Its function is as follows. Part of the high-affinity ATP-driven potassium transport (or Kdp) system, which catalyzes the hydrolysis of ATP coupled with the electrogenic transport of potassium into the cytoplasm. This subunit binds the extracellular potassium ions and delivers the ions to the membrane domain of KdpB through an intramembrane tunnel. The sequence is that of Potassium-transporting ATPase potassium-binding subunit from Thermoplasma acidophilum (strain ATCC 25905 / DSM 1728 / JCM 9062 / NBRC 15155 / AMRC-C165).